Here is an 89-residue protein sequence, read N- to C-terminus: Small ribosomal subunit protein uS15 (89 aa).

This sequence belongs to the universal ribosomal protein uS15 family. As to quaternary structure, part of the 30S ribosomal subunit. Forms a bridge to the 50S subunit in the 70S ribosome, contacting the 23S rRNA.

Functionally, one of the primary rRNA binding proteins, it binds directly to 16S rRNA where it helps nucleate assembly of the platform of the 30S subunit by binding and bridging several RNA helices of the 16S rRNA. Forms an intersubunit bridge (bridge B4) with the 23S rRNA of the 50S subunit in the ribosome. The protein is Small ribosomal subunit protein uS15 of Erwinia tasmaniensis (strain DSM 17950 / CFBP 7177 / CIP 109463 / NCPPB 4357 / Et1/99).